The chain runs to 185 residues: Ribose 1,5-bisphosphate phosphokinase PhnN (185 aa).

An ATP-binding site is contributed by 10–17 (GPSGSGKD).

Belongs to the ribose 1,5-bisphosphokinase family.

The catalysed reaction is alpha-D-ribose 1,5-bisphosphate + ATP = 5-phospho-alpha-D-ribose 1-diphosphate + ADP. It participates in metabolic intermediate biosynthesis; 5-phospho-alpha-D-ribose 1-diphosphate biosynthesis; 5-phospho-alpha-D-ribose 1-diphosphate from D-ribose 5-phosphate (route II): step 3/3. Functionally, catalyzes the phosphorylation of ribose 1,5-bisphosphate to 5-phospho-D-ribosyl alpha-1-diphosphate (PRPP). This is Ribose 1,5-bisphosphate phosphokinase PhnN from Pseudomonas paraeruginosa (strain DSM 24068 / PA7) (Pseudomonas aeruginosa (strain PA7)).